The primary structure comprises 552 residues: Cytochrome P450 monooxyhenase eriI (552 aa).

The helical transmembrane segment at 9 to 26 threads the bilayer; sequence FALKASAAVAVLLLAAWV. Residues N50 and N447 are each glycosylated (N-linked (GlcNAc...) asparagine). Residue C495 participates in heme binding.

The protein belongs to the cytochrome P450 family. It depends on heme as a cofactor.

The protein resides in the membrane. It carries out the reaction (-)-cyatha-3,12-diene + reduced [NADPH--hemoprotein reductase] + O2 = erinacol + oxidized [NADPH--hemoprotein reductase] + H2O + H(+). It participates in secondary metabolite biosynthesis. Cytochrome P450 monooxygenase; part of the gene cluster that mediates the biosynthesis of erinacines, cyathane-xylosides that show unique biological activities, including leishmanicidal activity, stimulating activity for nerve growth-factor synthesis, and agonistic activity toward the kappa opioid receptor. Within the pathway, eriI hydroxylates cyatha-3,12-diene at C-14 of the seven-membered ring to yield erinacol. The first step of the erinacines biosynthesis pathway is catalyzed by the geranylgeranyl diphosphate (GGPP) synthase eriE via conversion of farnesyl pyrophosphate and isopentyl pyrophosphate into geranylgeranyl pyrophosphate (GGPP). GGPP is then substrate of the diterpene cyclase eriG for the production of cyatha-3,12-diene. The cytochrome P450 monooxygenase eriI then hydroxylates cyatha-3,12-diene at C-14 of the seven-membered ring to produce erinacol, which is further hydroxylated at C-15 by the cytochrome P450 monooxygenase eriC to yield cyathadiol. The cytochrome P450 monooxygenase eriA then catalyzes C-11 hydroxylation in the presence of the short chain dehydrogenase/reductase (SDR) eriH, which leads to the production of cyathatriol. The acetyltransferase eriL converts cyathatriol into 11-O-acetyl-cyathatriol. The SDR eriH catalyzes further oxidation of 11-O-acetyl-cyathatriol into 1-O-acetylcyathin A3. Finally, the glycosyl transferase eriJ tranfers xylose from UDP-xylose onto C-14 of 11-O-acetyl-cyathatriol to form eracine Q. EriJ is also able to convert 11-O-acetyl-cyathatriol to eracine Q2 by using UDP-D-glucose as cosubstrate, but at a lower rate. Its function is as follows. Cytochrome P450 monooxygenase; part of the gene cluster that mediates the biosynthesis of erinacines, cyathane-xylosides that show unique biological activities, including leishmanicidal activity, stimulating activity for nerve growth-factor synthesis, and agonistic activity toward the kappa opioid receptor. The geranylgeranyl diphosphate (GGPP) synthase eriE catalyzes the first step in erinacines biosynthesis via conversion of farnesyl pyrophosphate and isopentyl pyrophosphate into geranylgeranyl pyrophosphate (GGPP). GGPP is then substrate of the diterpene cyclase eriG for the production of cyatha-3,12-diene. EriG is unable to use geranyl diphosphate (GPP) or farnesyl diphosphate (FPP) as substrates. The cytochrome P450 monooxygenase eriI then hydroxylates cyatha-3,12-diene at C-14 of the seven-membered ring to produce erinacol, which is further hydroxylated at C-15 by the cytochrome P450 monooxygenase eriC to yield cyathadiol. The cytochrome P450 monooxygenase eriA then catalyzes C-11 hydroxylation in the presence of the short chain dehydrogenase/reductase (SDR) eriH, which leads to the production of cyathatriol. The acetyltransferase eriL converts cyathatriol into 11-O-acetyl-cyathatriol. The SDR eriH catalyzes further oxidation of 11-O-acetyl-cyathatriol into 1-O-acetylcyathin A3. Finally, the glycosyl transferase eriJ tranfers xylose from UDP-xylose onto C-14 of 11-O-acetyl-cyathatriol to form eracine Q. EriJ is also able to convert 11-O-acetyl-cyathatriol to eracine Q2 by using UDP-D-glucose as cosubstrate, but at a lower rate. In the absence of eriL and eriJ, the SDR eriH is able to convert cyathatriol to cyathin A3; this is likely a switching mechanism in the biosynthesis of cyathins (C-14 ketogroup)and erinacines (C-14 glycosylated group). The roles of the SDR eriB, the polyprenyl transferase eriF and the dehydrogenase eriK have still to be identified. In Hericium erinaceus (Lion's mane mushroom), this protein is Cytochrome P450 monooxyhenase eriI.